We begin with the raw amino-acid sequence, 577 residues long: Hemagglutinin-neuraminidase (577 aa).

Residue methionine 1 is modified to Blocked amino end (Met); by host. Residues methionine 1–arginine 26 lie on the Intravirion side of the membrane. Residues isoleucine 27–methionine 48 traverse the membrane as a helical segment. Over glycine 49–glycine 577 the chain is Virion surface. Asparagine 119 carries an N-linked (GlcNAc...) asparagine; by host glycan. Residues glycine 124–tyrosine 152 are important for interaction with fusion/F protein. Disulfide bonds link cysteine 172-cysteine 196, cysteine 186-cysteine 247, and cysteine 238-cysteine 251. The interval asparagine 234 to serine 239 is involved in neuraminidase activity. 2 N-linked (GlcNAc...) asparagine; by host glycosylation sites follow: asparagine 341 and asparagine 433. Cystine bridges form between cysteine 344-cysteine 461 and cysteine 455-cysteine 465. Residues asparagine 481 and asparagine 538 are each glycosylated (N-linked (GlcNAc...) asparagine; by host). Cysteine 531 and cysteine 542 are joined by a disulfide.

It belongs to the paramyxoviruses hemagglutinin-neuraminidase family. As to quaternary structure, homotetramer; composed of disulfide-linked homodimers. Interacts with F protein trimer. Interacts with host CG-1B; this interaction inhibits viral adsorption and replication rather than internalization.

It is found in the virion membrane. The protein localises to the host cell membrane. It carries out the reaction Hydrolysis of alpha-(2-&gt;3)-, alpha-(2-&gt;6)-, alpha-(2-&gt;8)- glycosidic linkages of terminal sialic acid residues in oligosaccharides, glycoproteins, glycolipids, colominic acid and synthetic substrates.. Functionally, mediates the viral entry into the host cell together with fusion/F protein. Attaches the virus to sialic acid-containing cell receptors and thereby initiates infection. Binding of HN protein to the receptor induces a conformational change that allows the F protein to trigger virion/cell membranes fusion. Neuraminidase activity ensures the efficient spread of the virus by dissociating the mature virions from the neuraminic acid containing glycoproteins. The chain is Hemagglutinin-neuraminidase (HN) from Gallus gallus (Chicken).